Consider the following 300-residue polypeptide: Delta(7)-sterol 5(6)-desaturase erg31 (300 aa).

Helical transmembrane passes span 33 to 53 (ISLF…FASL), 78 to 98 (VLTA…WFLA), and 117 to 137 (YFLC…YWAH). One can recognise a Fatty acid hydroxylase domain in the interval 123–248 (PLFVMFSDFG…FTTLFDRLGN (126 aa)). Positions 137-141 (HRFLH) match the Histidine box-1 motif. A Histidine box-2 motif is present at residues 150 to 154 (HKLHH). A helical transmembrane segment spans residues 180–200 (HLFPFFFPLHKLTYLALFTFV). The Histidine box-3 motif lies at 225 to 229 (HNGHH).

The protein belongs to the sterol desaturase family. Fe cation is required as a cofactor.

It is found in the endoplasmic reticulum membrane. The catalysed reaction is episterol + 2 Fe(II)-[cytochrome b5] + O2 + 2 H(+) = 5-dehydroepisterol + 2 Fe(III)-[cytochrome b5] + 2 H2O. It functions in the pathway steroid metabolism; ergosterol biosynthesis. Its function is as follows. C-5 sterol desaturase; part of the third module of ergosterol biosynthesis pathway that includes by the late steps of the pathway. Erg31 and erg32 catalyze the introduction of a C-5 double bond in the B ring to produce 5-dehydroepisterol. The third module or late pathway involves the ergosterol synthesis itself through consecutive reactions that mainly occur in the endoplasmic reticulum (ER) membrane. Firstly, the squalene synthase erg9 catalyzes the condensation of 2 farnesyl pyrophosphate moieties to form squalene, which is the precursor of all steroids. Secondly, squalene is converted into lanosterol by the consecutive action of the squalene epoxidase erg1 and the lanosterol synthase erg7. The lanosterol 14-alpha-demethylase erg11/cyp1 catalyzes C14-demethylation of lanosterol to produce 4,4'-dimethyl cholesta-8,14,24-triene-3-beta-ol. In the next steps, a complex process involving various demethylation, reduction and desaturation reactions catalyzed by the C-14 reductase erg24 and the C-4 demethylation complex erg25-erg26-erg27 leads to the production of zymosterol. Erg28 likely functions in the C-4 demethylation complex reaction by tethering erg26 and Erg27 to the endoplasmic reticulum or to facilitate interaction between these proteins. Then, the sterol 24-C-methyltransferase erg6 catalyzes the methyl transfer from S-adenosyl-methionine to the C-24 of zymosterol to form fecosterol. The C-8 sterol isomerase erg2 catalyzes the reaction which results in unsaturation at C-7 in the B ring of sterols and thus converts fecosterol to episterol. The sterol-C5-desaturases erg31 and erg32 then catalyze the introduction of a C-5 double bond in the B ring to produce 5-dehydroepisterol. The C-22 sterol desaturase erg5 further converts 5-dehydroepisterol into ergosta-5,7,22,24(28)-tetraen-3beta-ol by forming the C-22(23) double bond in the sterol side chain. Finally, ergosta-5,7,22,24(28)-tetraen-3beta-ol is substrate of the C-24(28) sterol reductase erg4 to produce ergosterol. In the genus Schizosaccharomyces, a second route exists between lanosterol and fecosterol, via the methylation of lanosterol to eburicol by erg6, followed by C14-demethylation by erg11/cyp1 and C4-demethylation by the demethylation complex erg25-erg26-erg27. The protein is Delta(7)-sterol 5(6)-desaturase erg31 of Schizosaccharomyces pombe (strain 972 / ATCC 24843) (Fission yeast).